Reading from the N-terminus, the 127-residue chain is ATP synthase epsilon chain (127 aa).

It belongs to the ATPase epsilon chain family. As to quaternary structure, F-type ATPases have 2 components, CF(1) - the catalytic core - and CF(0) - the membrane proton channel. CF(1) has five subunits: alpha(3), beta(3), gamma(1), delta(1), epsilon(1). CF(0) has three main subunits: a, b and c.

The protein localises to the cell inner membrane. Its function is as follows. Produces ATP from ADP in the presence of a proton gradient across the membrane. The sequence is that of ATP synthase epsilon chain from Leptospira interrogans serogroup Icterohaemorrhagiae serovar copenhageni (strain Fiocruz L1-130).